Consider the following 269-residue polypeptide: Formamidopyrimidine-DNA glycosylase (269 aa).

The active-site Schiff-base intermediate with DNA is Pro-2. Glu-3 functions as the Proton donor in the catalytic mechanism. Lys-57 serves as the catalytic Proton donor; for beta-elimination activity. Residues His-90, Arg-109, and Lys-150 each coordinate DNA. Residues 235–269 form an FPG-type zinc finger; sequence QVYGRKGEPCRVCGTPIVATKHAQRATFYCRQCQK. The Proton donor; for delta-elimination activity role is filled by Arg-259.

The protein belongs to the FPG family. As to quaternary structure, monomer. Requires Zn(2+) as cofactor.

It catalyses the reaction Hydrolysis of DNA containing ring-opened 7-methylguanine residues, releasing 2,6-diamino-4-hydroxy-5-(N-methyl)formamidopyrimidine.. The catalysed reaction is 2'-deoxyribonucleotide-(2'-deoxyribose 5'-phosphate)-2'-deoxyribonucleotide-DNA = a 3'-end 2'-deoxyribonucleotide-(2,3-dehydro-2,3-deoxyribose 5'-phosphate)-DNA + a 5'-end 5'-phospho-2'-deoxyribonucleoside-DNA + H(+). Its function is as follows. Involved in base excision repair of DNA damaged by oxidation or by mutagenic agents. Acts as a DNA glycosylase that recognizes and removes damaged bases. Has a preference for oxidized purines, such as 7,8-dihydro-8-oxoguanine (8-oxoG). Has AP (apurinic/apyrimidinic) lyase activity and introduces nicks in the DNA strand. Cleaves the DNA backbone by beta-delta elimination to generate a single-strand break at the site of the removed base with both 3'- and 5'-phosphates. In Escherichia coli O6:H1 (strain CFT073 / ATCC 700928 / UPEC), this protein is Formamidopyrimidine-DNA glycosylase.